Consider the following 333-residue polypeptide: G-protein coupled receptor 146 (333 aa).

The Extracellular portion of the chain corresponds to M1–R22. N-linked (GlcNAc...) asparagine glycosylation occurs at N8. A helical membrane pass occupies residues L23–Y43. Residues N44–Y64 are Cytoplasmic-facing. A helical transmembrane segment spans residues F65–G85. Over P86–H101 the chain is Extracellular. The helical transmembrane segment at V102–L122 threads the bilayer. At S123–H145 the chain is on the cytoplasmic side. A helical membrane pass occupies residues V146–I166. Over C167–A188 the chain is Extracellular. A helical membrane pass occupies residues I189–I209. The Cytoplasmic portion of the chain corresponds to S210 to R232. Residues L233–G253 form a helical membrane-spanning segment. Residues H254–D277 are Extracellular-facing. The chain crosses the membrane as a helical span at residues L278–N298. At K299–A333 the chain is on the cytoplasmic side.

Belongs to the G-protein coupled receptor 1 family.

Its subcellular location is the cell membrane. GPCR receptor required for the regulation of plasma cholesterol levels. Receptor for CHLSN, a gut derived hormone which mediates an inhibitory effect of intestinal cholesterol absorption on hepatic cholesterol synthesis. Cholesin-binding exerts an antagonistic effect by inhibiting PKA signaling and suppressing SREBF2-controlled cholesterol in the liver. The polypeptide is G-protein coupled receptor 146 (Gpr146) (Mus musculus (Mouse)).